Reading from the N-terminus, the 393-residue chain is S-adenosylmethionine synthase (393 aa).

His-16 lines the ATP pocket. A Mg(2+)-binding site is contributed by Asp-18. Glu-44 contacts K(+). L-methionine contacts are provided by Glu-57 and Gln-100. A flexible loop region spans residues 100–110; it reads QSNDIAQGVDH. ATP contacts are provided by residues 167–169, 238–239, Asp-247, 253–254, Ala-270, and Lys-274; these read DAK, RF, and RK. Residue Asp-247 coordinates L-methionine. An L-methionine-binding site is contributed by Lys-278.

Belongs to the AdoMet synthase family. In terms of assembly, homotetramer; dimer of dimers. Mg(2+) is required as a cofactor. The cofactor is K(+).

It is found in the cytoplasm. The catalysed reaction is L-methionine + ATP + H2O = S-adenosyl-L-methionine + phosphate + diphosphate. It participates in amino-acid biosynthesis; S-adenosyl-L-methionine biosynthesis; S-adenosyl-L-methionine from L-methionine: step 1/1. Functionally, catalyzes the formation of S-adenosylmethionine (AdoMet) from methionine and ATP. The overall synthetic reaction is composed of two sequential steps, AdoMet formation and the subsequent tripolyphosphate hydrolysis which occurs prior to release of AdoMet from the enzyme. The protein is S-adenosylmethionine synthase of Acidovorax sp. (strain JS42).